A 188-amino-acid chain; its full sequence is Methylamine dehydrogenase light chain (188 aa).

Positions 1 to 57 form a signal peptide, tat-type signal; that stretch reads MLGNFRFDDMVEKLSRRVAGRTSRRGAIGRLGTVLAGAALVPLLPVDRRGRVSRANA. Disulfide bonds link C80/C145, C86/C118, C93/C178, C95/C143, C103/C134, and C135/C166. W114 is modified (tryptophylquinone). The segment at residues 114–165 is a cross-link (tryptophan tryptophylquinone (Trp-Trp)); that stretch reads WVASCYNPTDGQSYLIAYRDCCGYNVSGRCPCLNTEGELPVYRPEFANDIIW.

The protein belongs to the aromatic amine dehydrogenase light chain family. In terms of assembly, heterotetramer of two light and two heavy chains. The cofactor is tryptophan tryptophylquinone residue. In terms of processing, predicted to be exported by the Tat system. The position of the signal peptide cleavage has been experimentally proven. Tryptophan tryptophylquinone (TTQ) is formed by oxidation of the indole ring of a tryptophan to form tryptophylquinone followed by covalent cross-linking with another tryptophan residue.

Its subcellular location is the periplasm. The enzyme catalyses 2 oxidized [amicyanin] + methylamine + H2O = 2 reduced [amicyanin] + formaldehyde + NH4(+) + 2 H(+). Its pathway is one-carbon metabolism; methylamine degradation; formaldehyde from methylamine: step 1/1. Its function is as follows. Methylamine dehydrogenase carries out the oxidation of methylamine. Electrons are passed from methylamine dehydrogenase to amicyanin. The chain is Methylamine dehydrogenase light chain (mauA) from Paracoccus versutus (Thiobacillus versutus).